Reading from the N-terminus, the 501-residue chain is MRRNLSHIIAAAFNEPLLLEPAYARVFFCALGREMGAASLSVPQQQVQFDAPGMLAETDEYMAGGKRPARVYRVVNGIAVLPVTGTLVHRLGGMRPFSGMTGYDGIVACLQQAMADSQVRGVLLDIDSPGGQAAGAFDCADMIYRLRQQKPVWALCNDTACSAAMLLASACSRRLVTQTSRIGSIGVMMSHVSYAGHLAQAGVDITLIYSGAHKVDGNQFEALPAEVRQDMQQRIDAARRMFAEKVAMYTGLSVDAVTGTEAAVFEGQSGIEAGLADELINASDAISVMATALNSNVRGGTMPQLTATEAAAQENQRVMGILTCQEAKGREQLATMLAGQQGMSVEQARAILAAAAPQQPVASTQSEADRIMVCEEANGREQLAATLAAMPEMTVEKARPILAASPQADAGPSLRDQIMALDEAKGAEAQAEQLAACPGMTVESARAVLAAGSGKAEPVSASTTAMFEHFMANHSPAAVQGGVAQTSADGDADVKMLMAMP.

Residue Ser162 is the Nucleophile of the active site. Lys214 acts as the Proton donor/acceptor in catalysis. TRI repeat units lie at residues 321 to 358 (ILTC…AAPQ), 371 to 417 (IMVC…LRDQ), and 418 to 455 (IMAL…GSGK). The 3 X 38 AA repeats stretch occupies residues 321–455 (ILTCQEAKGR…RAVLAAGSGK (135 aa)).

This sequence belongs to the peptidase S49 family.

Scaffold protein GP6 forms the scaffold for capsid assembly and is required for binding of the 5 and 4 protein products. It is subsequently lost from the head during maturation. The protein is Head-tail preconnector protein GP5 (5) of Escherichia coli (Bacteriophage 21).